Here is a 282-residue protein sequence, read N- to C-terminus: HTH-type transcriptional activator RhaR (282 aa).

In terms of domain architecture, HTH araC/xylS-type spans 179–277 (DKLITALANS…GMTPSQWRHL (99 aa)). 2 consecutive DNA-binding regions (H-T-H motif) follow at residues 196 to 217 (DAFC…RAQT) and 244 to 267 (ISEI…TRET).

In terms of assembly, binds DNA as a dimer.

Its subcellular location is the cytoplasm. In terms of biological role, activates expression of the rhaSR operon in response to L-rhamnose. This chain is HTH-type transcriptional activator RhaR, found in Salmonella agona (strain SL483).